The following is a 1858-amino-acid chain: Inactive histone-lysine N-methyltransferase 2E (1858 aa).

An HCFC1-binding motif (HBM) motif is present at residues 63-66 (DHNY). The segment at 118–166 (VTRCICGFTHDDGYMICCDKCSVWQHIDCMGIDRQHIPDTYLCERCQPR) adopts a PHD-type zinc-finger fold. Residues cysteine 121, cysteine 123, cysteine 135, cysteine 138, histidine 143, cysteine 146, cysteine 160, and cysteine 163 each coordinate Zn(2+). Residues 217-269 (ASRVSKVNDKRRKKSGEKEQHISKCKKAFREGSRKSSRVKGSAPEIDPSSDGS) form a disordered region. Positions 232–250 (GEKEQHISKCKKAFREGSR) are enriched in basic and acidic residues. Residues 330-447 (PPVESHIQKN…KGTEITIAFD (118 aa)) form the SET domain. O-linked (GlcNAc) serine glycosylation occurs at serine 435. Threonine 440 carries an O-linked (GlcNAc) threonine glycan. The segment at 475–530 (SESMENINSGYETRRKKGKKDKDISKEKDTQNQNITLDCEGTTNKMKSPETKQRKL) is disordered. The span at 494–504 (KDKDISKEKDT) shows a compositional bias: basic and acidic residues. The segment covering 505–520 (QNQNITLDCEGTTNKM) has biased composition (polar residues). A coiled-coil region spans residues 559-615 (VEMESEEQIAERKRKMTREERKMEAILQAFARLEKREKRREQALERISTAKTEVKTE). A Phosphoserine modification is found at serine 623. The disordered stretch occupies residues 630–687 (EQAKEENASKPTPAKVNRTKQRKSFSRSRTHIGQQRRRHRTVSMCSDIQPSSPDIEVT). A compositionally biased stretch (basic residues) spans 646 to 670 (NRTKQRKSFSRSRTHIGQQRRRHRT). A compositionally biased stretch (polar residues) spans 672 to 687 (SMCSDIQPSSPDIEVT). A phosphoserine mark is found at serine 837 and serine 845. 2 stretches are compositionally biased toward low complexity: residues 887-901 (TSTPTPSPYATPTHT) and 933-957 (PVTPVTPGTPGNTMHFENISSPESS). Disordered regions lie at residues 887–960 (TSTP…SPEI) and 1039–1068 (LETPAHDRAEPNSQLDSTHSGRGTMYSSWV). Residues 1039 to 1048 (LETPAHDRAE) show a composition bias toward basic and acidic residues. The span at 1049 to 1068 (PNSQLDSTHSGRGTMYSSWV) shows a compositional bias: polar residues. Position 1070 is a phosphoserine (serine 1070). Disordered stretches follow at residues 1164–1561 (KRQR…QNQQ) and 1581–1835 (VFTS…PVPG). Composition is skewed to polar residues over residues 1186-1206 (PHASGSLSNNGDGCASSNDNG) and 1222-1235 (TVYNATSEETSNNC). Serine 1273 carries the post-translational modification Phosphoserine. The segment covering 1273-1282 (SDHRKDKDSG) has biased composition (basic and acidic residues). Composition is skewed to low complexity over residues 1285 to 1303 (SPCVSCSPSHVQSSPSSHS) and 1349 to 1362 (KSPPKMSKPGSPGS). Position 1359 is a phosphoserine (serine 1359). 2 stretches are compositionally biased toward polar residues: residues 1400 to 1432 (QQKQLSNNNQALSKNHPPQTHVRNSSEQLSQKL) and 1506 to 1542 (LPANTQQATSGTLFTQTPSGQSSATYSQFNQQSLNST). A compositionally biased stretch (pro residues) spans 1543–1553 (APPPPPPPPPS). A compositionally biased stretch (polar residues) spans 1581–1599 (VFTSGPNQALPGTTSQQTV). Residues 1626 to 1637 (VPPPPPPPPAPG) are compositionally biased toward pro residues. Residues 1642 to 1651 (QQPNSHQQHS) show a composition bias toward polar residues. Residues 1677–1687 (LPPPPPPPGPA) are compositionally biased toward pro residues. Positions 1698–1711 (TGLQGLQAQHQHVV) are enriched in polar residues. Residues 1714–1724 (APPPPPPPPPS) show a composition bias toward pro residues. Positions 1798–1808 (QGPNSIPTPTA) are enriched in polar residues.

It belongs to the class V-like SAM-binding methyltransferase superfamily. Histone-lysine methyltransferase family. TRX/MLL subfamily. In terms of assembly, component of a complex composed of KMT2E (isoform 3), OGT and USP7; the complex stabilizes KMT2E, preventing KMT2E ubiquitination and proteasomal-mediated degradation. Isoform 3 interacts (via N-terminus) with OGT (via TRP repeats). Isoform 3 interacts with deubiquitinating enzyme USP7 (via MATH domain). Isoform 3 interacts (via HBM motif) with HCFC1 (via Kelch domain). Isoform 3 interacts with E2F1; the interaction is probably indirect and is mediated via HCFC1. In terms of processing, ubiquitinated. Deubiquitinated by USP7. O-glycosylated at Ser-435 and Thr-440 in the SET domain by OGT which probably prevents KMT2E proteasomal-mediated degradation. As to expression, widely expressed in both adult and fetal tissues. Highest levels of expression observed in fetal thymus and kidney and in adult hematopoietic tissues, jejunum and cerebellum. Isoform NKp44L: Not detected on circulating cells from healthy individuals, but is expressed on a large panel of tumor and transformed cells.

The protein resides in the chromosome. The protein localises to the cytoplasm. It is found in the cytoskeleton. Its subcellular location is the microtubule organizing center. It localises to the centrosome. The protein resides in the nucleus speckle. The protein localises to the nucleus. It is found in the nucleoplasm. Its subcellular location is the cell membrane. Functionally, associates with chromatin regions downstream of transcriptional start sites of active genes and thus regulates gene transcription. Chromatin interaction is mediated via the binding to tri-methylated histone H3 at 'Lys-4' (H3K4me3). Key regulator of hematopoiesis involved in terminal myeloid differentiation and in the regulation of hematopoietic stem cell (HSCs) self-renewal by a mechanism that involves DNA methylation. Also acts as an important cell cycle regulator, participating in cell cycle regulatory network machinery at multiple cell cycle stages including G1/S transition, S phase progression and mitotic entry. Recruited to E2F1 responsive promoters by HCFC1 where it stimulates tri-methylation of histone H3 at 'Lys-4' and transcriptional activation and thereby facilitates G1 to S phase transition. During myoblast differentiation, required to suppress inappropriate expression of S-phase-promoting genes and maintain expression of determination genes in quiescent cells. In terms of biological role, cellular ligand for NCR2/NKp44, may play a role as a danger signal in cytotoxicity and NK-cell-mediated innate immunity. The protein is Inactive histone-lysine N-methyltransferase 2E (KMT2E) of Homo sapiens (Human).